The following is a 459-amino-acid chain: Glutamate--tRNA ligase 1 (459 aa).

The 'HIGH' region motif lies at 8–18 (PSPTGYIHIGN). Residues 249-253 (GLSKR) carry the 'KMSKS' region motif. An ATP-binding site is contributed by Lys-252.

This sequence belongs to the class-I aminoacyl-tRNA synthetase family. Glutamate--tRNA ligase type 1 subfamily. In terms of assembly, monomer.

It localises to the cytoplasm. The catalysed reaction is tRNA(Glu) + L-glutamate + ATP = L-glutamyl-tRNA(Glu) + AMP + diphosphate. Catalyzes the attachment of glutamate to tRNA(Glu) in a two-step reaction: glutamate is first activated by ATP to form Glu-AMP and then transferred to the acceptor end of tRNA(Glu). The polypeptide is Glutamate--tRNA ligase 1 (Bartonella quintana (strain Toulouse) (Rochalimaea quintana)).